We begin with the raw amino-acid sequence, 279 residues long: Movement protein (279 aa).

Residues 246-279 (SESEELNVESPPAAIGSSSASRSEAFRPQVVNGL) are disordered. The segment covering 254 to 268 (ESPPAAIGSSSASRS) has biased composition (low complexity).

Belongs to the cucumovirus movement protein family.

The protein resides in the host cell junction. It localises to the host plasmodesma. In terms of biological role, transports viral genome to neighboring plant cells directly through plasmosdesmata, without any budding. The movement protein allows efficient cell to cell propagation, by bypassing the host cell wall barrier. Acts by forming a tubular structure at the host plasmodesmata, enlarging it enough to allow free passage of virion capsids. The sequence is that of Movement protein from Cucumis sativus (Cucumber).